We begin with the raw amino-acid sequence, 430 residues long: Histidinol dehydrogenase (430 aa).

Tyr-130, Gln-191, and Asn-214 together coordinate NAD(+). Residues Ser-237, Gln-259, and His-262 each contribute to the substrate site. Residues Gln-259 and His-262 each contribute to the Zn(2+) site. Catalysis depends on proton acceptor residues Glu-327 and His-328. 4 residues coordinate substrate: His-328, Asp-361, Glu-415, and His-420. Asp-361 is a Zn(2+) binding site. His-420 is a Zn(2+) binding site.

The protein belongs to the histidinol dehydrogenase family. Zn(2+) is required as a cofactor.

It carries out the reaction L-histidinol + 2 NAD(+) + H2O = L-histidine + 2 NADH + 3 H(+). Its pathway is amino-acid biosynthesis; L-histidine biosynthesis; L-histidine from 5-phospho-alpha-D-ribose 1-diphosphate: step 9/9. In terms of biological role, catalyzes the sequential NAD-dependent oxidations of L-histidinol to L-histidinaldehyde and then to L-histidine. The sequence is that of Histidinol dehydrogenase from Brucella abortus (strain 2308).